A 303-amino-acid polypeptide reads, in one-letter code: Bifunctional protein FolD (303 aa).

Residues Gly175 to Ser177 and Ile243 each bind NADP(+).

It belongs to the tetrahydrofolate dehydrogenase/cyclohydrolase family. In terms of assembly, homodimer.

The catalysed reaction is (6R)-5,10-methylene-5,6,7,8-tetrahydrofolate + NADP(+) = (6R)-5,10-methenyltetrahydrofolate + NADPH. The enzyme catalyses (6R)-5,10-methenyltetrahydrofolate + H2O = (6R)-10-formyltetrahydrofolate + H(+). It participates in one-carbon metabolism; tetrahydrofolate interconversion. Functionally, catalyzes the oxidation of 5,10-methylenetetrahydrofolate to 5,10-methenyltetrahydrofolate and then the hydrolysis of 5,10-methenyltetrahydrofolate to 10-formyltetrahydrofolate. The protein is Bifunctional protein FolD of Xanthomonas oryzae pv. oryzae (strain PXO99A).